An 876-amino-acid chain; its full sequence is Alanine--tRNA ligase (876 aa).

Zn(2+) contacts are provided by His-562, His-566, Cys-666, and His-670.

The protein belongs to the class-II aminoacyl-tRNA synthetase family. Requires Zn(2+) as cofactor.

It localises to the cytoplasm. It catalyses the reaction tRNA(Ala) + L-alanine + ATP = L-alanyl-tRNA(Ala) + AMP + diphosphate. Catalyzes the attachment of alanine to tRNA(Ala) in a two-step reaction: alanine is first activated by ATP to form Ala-AMP and then transferred to the acceptor end of tRNA(Ala). Also edits incorrectly charged Ser-tRNA(Ala) and Gly-tRNA(Ala) via its editing domain. This chain is Alanine--tRNA ligase, found in Hahella chejuensis (strain KCTC 2396).